We begin with the raw amino-acid sequence, 1412 residues long: DNA-directed RNA polymerase subunit beta' (1412 aa).

Residues cysteine 71, cysteine 73, cysteine 86, and cysteine 89 each coordinate Zn(2+). The Mg(2+) site is built by aspartate 461, aspartate 463, and aspartate 465. Zn(2+) contacts are provided by cysteine 815, cysteine 889, cysteine 896, and cysteine 899.

Belongs to the RNA polymerase beta' chain family. In terms of assembly, the RNAP catalytic core consists of 2 alpha, 1 beta, 1 beta' and 1 omega subunit. When a sigma factor is associated with the core the holoenzyme is formed, which can initiate transcription. It depends on Mg(2+) as a cofactor. Zn(2+) is required as a cofactor.

The enzyme catalyses RNA(n) + a ribonucleoside 5'-triphosphate = RNA(n+1) + diphosphate. In terms of biological role, DNA-dependent RNA polymerase catalyzes the transcription of DNA into RNA using the four ribonucleoside triphosphates as substrates. The protein is DNA-directed RNA polymerase subunit beta' of Actinobacillus pleuropneumoniae serotype 5b (strain L20).